A 617-amino-acid polypeptide reads, in one-letter code: DNA mismatch repair protein MutL (617 aa).

This sequence belongs to the DNA mismatch repair MutL/HexB family.

In terms of biological role, this protein is involved in the repair of mismatches in DNA. It is required for dam-dependent methyl-directed DNA mismatch repair. May act as a 'molecular matchmaker', a protein that promotes the formation of a stable complex between two or more DNA-binding proteins in an ATP-dependent manner without itself being part of a final effector complex. The protein is DNA mismatch repair protein MutL of Christiangramia forsetii (strain DSM 17595 / CGMCC 1.15422 / KT0803) (Gramella forsetii).